The following is a 148-amino-acid chain: Putative nickel-responsive regulator (148 aa).

The Ni(2+) site is built by H88, H99, H101, and C107.

The protein belongs to the transcriptional regulatory CopG/NikR family. Ni(2+) is required as a cofactor.

Its function is as follows. Transcriptional regulator. The polypeptide is Putative nickel-responsive regulator (Helicobacter pylori (strain HPAG1)).